The chain runs to 500 residues: UDP-GalNAc:beta-1,3-N-acetylgalactosaminyltransferase 2 (500 aa).

Over 1–6 (MRNWLV) the chain is Cytoplasmic. Residues 7–23 (LLCPCVLGAALHLWLRL) form a helical; Signal-anchor for type II membrane protein membrane-spanning segment. Topologically, residues 24–500 (RSPPPACASG…CGDPCRCQAR (477 aa)) are lumenal. N-linked (GlcNAc...) asparagine glycosylation is found at Asn-116 and Asn-174.

Belongs to the glycosyltransferase 31 family. N-glycosylated. In terms of tissue distribution, expressed in all tissues examined, but at highest levels in testis, adipose tissue, skeletal muscle and ovary.

The protein resides in the golgi apparatus membrane. The protein localises to the endoplasmic reticulum. The enzyme catalyses 3-O-(N-acetyl-beta-D-glucosaminyl-(1-&gt;4)-alpha-D-mannosyl)-L-threonyl-[protein] + UDP-N-acetyl-alpha-D-galactosamine = 3-O-[beta-D-GalNAc-(1-&gt;3)-beta-D-GlcNAc-(1-&gt;4)-alpha-D-Man]-L-Thr-[protein] + UDP + H(+). Its pathway is protein modification; protein glycosylation. Its function is as follows. Beta-1,3-N-acetylgalactosaminyltransferase that synthesizes a unique carbohydrate structure, GalNAc-beta-1-3GlcNAc, on N- and O-glycans. Has no galactose nor galactosaminyl transferase activity toward any acceptor substrate. Involved in alpha-dystroglycan (DAG1) glycosylation: acts coordinately with GTDC2/POMGnT2 to synthesize a GalNAc-beta3-GlcNAc-beta-terminus at the 4-position of protein O-mannose in the biosynthesis of the phosphorylated O-mannosyl trisaccharide (N-acetylgalactosamine-beta-3-N-acetylglucosamine-beta-4-(phosphate-6-)mannose), a carbohydrate structure present in alpha-dystroglycan, which is required for binding laminin G-like domain-containing extracellular proteins with high affinity. The chain is UDP-GalNAc:beta-1,3-N-acetylgalactosaminyltransferase 2 (B3GALNT2) from Homo sapiens (Human).